The sequence spans 571 residues: FAD-binding monooxygenase VdtE (571 aa).

FAD contacts are provided by residues 44–47, 56–57, and Tyr-62; these read VWYW and DS. 54 to 56 serves as a coordination point for NADP(+); sequence RVD. NADP(+) is bound by residues 187-193 and 210-211; these read TGASAVQ and RT.

Belongs to the FAD-binding monooxygenase family. FAD serves as cofactor.

It carries out the reaction 9,10-dihydroxy-7-methoxy-3-(2-oxopropyl)-1H-benzo[g]isochromen-1-one + NADPH + O2 + H(+) = methyl 2-[(3S)-9,10-dihydroxy-7-methoxy-1-oxo-1H,3H,4H-naphtho[2,3-c]pyran-3-yl]acetate + NADP(+) + H2O. The enzyme catalyses (3S)-9,10-dihydroxy-7-methoxy-3-(2-oxopropyl)-1H,3H,4H-naphtho[2,3-c]pyran-1-one + NADPH + O2 + H(+) = semiviriditoxin + NADP(+) + H2O. The protein operates within secondary metabolite biosynthesis. FAD-binding monooxygenase; part of the gene cluster that mediates the biosynthesis of viriditoxin, one of the 'classical' secondary metabolites produced by fungi and that has antibacterial activity. The first step is performed by the polyketide synthase VdtA which condenses one acetyl-CoA and 6 malonyl-CoA units to form the heptaketide monomer backbone of viriditoxin. The product of VdtA is then O-methylated on C7 by the O-methyltransferase VdtC. The O-methyl group is important for the stereoselective coupling of the monomers at the final step of viriditoxin biosynthesis. The short-chain dehydrogenase/reductase VdtF then acts as a stereospecific reductase converting the pyrone to dihydropyrone via the reduction of the C3-C4 double bond. The FAD-binding monooxygenase VdtE then converts the ketone group into a methyl-ester group to yield semi-viriditoxin. Finally, the laccase VdtB is involved in dimerization of 2 semi-viriditoxin molecules to yield the final viriditoxin. VdtB is responsible for the regioselective 6,6'-coupling of semi-viriditoxin, which yields (M)-viriditoxin and (P)-viriditoxin at a ratio of 1:2. The non-catalytic carboxylesterase-like protein VdtD affects the stereochemistical outcome of the coupling. The highly reducing polyketide synthase VdtX is not involved in viriditoxin synthesis, but might possibly play a role in the production of additional metabolites not identified yet. The polypeptide is FAD-binding monooxygenase VdtE (Byssochlamys spectabilis (Paecilomyces variotii)).